Reading from the N-terminus, the 1107-residue chain is Unconventional myosin-Ib (1107 aa).

In terms of domain architecture, Myosin motor spans 15–701 (IGVGDMVLLE…TLFQLEDLRK (687 aa)). The residue at position 60 (Ser60) is a Phosphoserine. 108-115 (GESGAGKT) is a binding site for ATP. A Glycyl lysine isopeptide (Lys-Gly) (interchain with G-Cter in SUMO1); alternate cross-link involves residue Lys287. Lys287 is covalently cross-linked (Glycyl lysine isopeptide (Lys-Gly) (interchain with G-Cter in SUMO2); alternate). The tract at residues 592–599 (YIRCIKPN) is actin-binding. 5 IQ domains span residues 704–727 (LEDL…FLLM), 728–749 (KRSQ…RYQQ), 750–778 (IKSS…HQKR), 780–807 (KEAA…EEAR), and 808–837 (RKHA…ANAG). In terms of domain architecture, TH1 spans 923–1107 (KALYPSSVGQ…NNRLLEVAVP (185 aa)).

This sequence belongs to the TRAFAC class myosin-kinesin ATPase superfamily. Myosin family. Prominent expression is seen in the brain, lung and liver. It is also expressed in the heart and testis. A high level expression is seen in virtually all neurons (but not glia) in the postnatal and adult mouse brain and in neuroblasts of the cerebellar external granular layer.

Its function is as follows. Motor protein that may participate in process critical to neuronal development and function such as cell migration, neurite outgrowth and vesicular transport. The protein is Unconventional myosin-Ib (Myo1b) of Mus musculus (Mouse).